Consider the following 533-residue polypeptide: Sterol 26-hydroxylase, mitochondrial (533 aa).

Residues Met1 to Ala32 constitute a mitochondrion transit peptide. The segment at Leu38–Ser58 is disordered. 2 positions are modified to N6-acetyllysine: Lys142 and Lys375. The interval Pro386 to Pro400 is sterol-binding. Cys479 provides a ligand contact to heme. Lys512 and Lys523 each carry N6-acetyllysine.

This sequence belongs to the cytochrome P450 family. As to quaternary structure, interacts with HSP70; this interaction is required for initial targeting to mitochondria. Heme is required as a cofactor. In terms of tissue distribution, expressed in liver, kidney and ovary.

Its subcellular location is the mitochondrion inner membrane. It catalyses the reaction 5beta-cholestane-3alpha,7alpha,12alpha-triol + 6 reduced [adrenodoxin] + 3 O2 + 5 H(+) = (25R)-3alpha,7alpha,12alpha-trihydroxy-5beta-cholestan-26-oate + 6 oxidized [adrenodoxin] + 4 H2O. It carries out the reaction cholestanol + 2 reduced [adrenodoxin] + O2 + 2 H(+) = (25R)-26-hydroxycholestanol + 2 oxidized [adrenodoxin] + H2O. The catalysed reaction is (25R)-3beta-hydroxycholest-5-en-7-one-26-al + 2 reduced [adrenodoxin] + O2 + H(+) = (25R)-3beta-hydroxycholest-5-en-7-one-26-oate + 2 oxidized [adrenodoxin] + H2O. The enzyme catalyses (25R)-3beta,26-dihydroxycholest-5-en-7-one + 2 reduced [adrenodoxin] + O2 + 2 H(+) = (25R)-3beta-hydroxycholest-5-en-7-one-26-al + 2 oxidized [adrenodoxin] + 2 H2O. It catalyses the reaction 7-oxocholesterol + 2 reduced [adrenodoxin] + O2 + 2 H(+) = (25R)-3beta,26-dihydroxycholest-5-en-7-one + 2 oxidized [adrenodoxin] + H2O. It carries out the reaction calciol + 2 reduced [adrenodoxin] + O2 + 2 H(+) = calcidiol + 2 oxidized [adrenodoxin] + H2O. The catalysed reaction is (25R)-5beta-cholestane-3alpha,7alpha,12alpha,26-tetrol + 2 reduced [adrenodoxin] + O2 + 2 H(+) = (25R)-3alpha,7alpha,12alpha-trihydroxy-5beta-cholestan-26-al + 2 oxidized [adrenodoxin] + 2 H2O. The enzyme catalyses 2 reduced [adrenodoxin] + cholesterol + O2 + 2 H(+) = (25R)-cholest-5-ene-3beta,26-diol + 2 oxidized [adrenodoxin] + H2O. It catalyses the reaction (25R)-3beta,4beta-dihydroxycholest-5-en-26-al + 2 reduced [adrenodoxin] + O2 + H(+) = (25R)-3beta,4beta-dihydroxycholest-5-en-26-oate + 2 oxidized [adrenodoxin] + H2O. It carries out the reaction (25R)-4beta,26-dihydroxycholesterol + 2 reduced [adrenodoxin] + O2 + 2 H(+) = (25R)-3beta,4beta-dihydroxycholest-5-en-26-al + 2 oxidized [adrenodoxin] + 2 H2O. The catalysed reaction is 4beta-hydroxycholesterol + 2 reduced [adrenodoxin] + O2 + 2 H(+) = (25R)-4beta,26-dihydroxycholesterol + 2 oxidized [adrenodoxin] + H2O. The enzyme catalyses (25R)-3beta-hydroxy-5-cholesten-26-al + 2 reduced [adrenodoxin] + O2 + H(+) = (25R)-3beta-hydroxy-5-cholestenoate + 2 oxidized [adrenodoxin] + H2O. It catalyses the reaction (25R)-cholest-5-ene-3beta,26-diol + 2 reduced [adrenodoxin] + O2 + 2 H(+) = (25R)-3beta-hydroxy-5-cholesten-26-al + 2 oxidized [adrenodoxin] + 2 H2O. It carries out the reaction (25R)-3alpha,7alpha,12alpha-trihydroxy-5beta-cholestan-26-al + 2 reduced [adrenodoxin] + O2 + H(+) = (25R)-3alpha,7alpha,12alpha-trihydroxy-5beta-cholestan-26-oate + 2 oxidized [adrenodoxin] + H2O. The catalysed reaction is 5beta-cholestane-3alpha,7alpha,12alpha-triol + 2 reduced [adrenodoxin] + O2 + 2 H(+) = (25R)-5beta-cholestane-3alpha,7alpha,12alpha,26-tetrol + 2 oxidized [adrenodoxin] + H2O. The protein operates within hormone biosynthesis; cholecalciferol biosynthesis. Its pathway is steroid metabolism; cholesterol degradation. It participates in lipid metabolism; bile acid biosynthesis. Its function is as follows. Cytochrome P450 monooxygenase that catalyzes regio- and stereospecific hydroxylation of cholesterol and its derivatives. Hydroxylates (with R stereochemistry) the terminal methyl group of cholesterol side-chain in a three step reaction to yield at first a C26 alcohol, then a C26 aldehyde and finally a C26 acid. Regulates cholesterol homeostasis by catalyzing the conversion of excess cholesterol to bile acids via both the 'neutral' (classic) and the 'acid' (alternative) pathways. May also regulate cholesterol homeostasis via generation of active oxysterols, which act as ligands for NR1H2 and NR1H3 nuclear receptors, modulating the transcription of genes involved in lipid metabolism. Plays a role in cholestanol metabolism in the cerebellum. Similarly to cholesterol, hydroxylates cholestanol and may facilitate sterol diffusion through the blood-brain barrier to the systemic circulation for further degradation. Also hydroxylates retinal 7-ketocholesterol, a noxious oxysterol with pro-inflammatory and pro-apoptotic effects, and may play a role in its elimination from the retinal pigment epithelium. May play a redundant role in vitamin D biosynthesis. Catalyzes 25-hydroxylation of vitamin D3 that is required for its conversion to a functionally active form. In Rattus norvegicus (Rat), this protein is Sterol 26-hydroxylase, mitochondrial (Cyp27a1).